Reading from the N-terminus, the 160-residue chain is Small ribosomal subunit protein bS6 (160 aa).

Basic and acidic residues-rich tracts occupy residues 94 to 119 (EEHE…RGGR) and 125 to 152 (RGDR…REDA). Positions 94-160 (EEHEEGPSAM…DADTAAASEE (67 aa)) are disordered.

The protein belongs to the bacterial ribosomal protein bS6 family.

Its function is as follows. Binds together with bS18 to 16S ribosomal RNA. The chain is Small ribosomal subunit protein bS6 from Rhodopseudomonas palustris (strain BisB5).